Here is a 204-residue protein sequence, read N- to C-terminus: Proteasome subunit beta type-3 (204 aa).

Belongs to the peptidase T1B family. In terms of assembly, the 26S proteasome consists of a 20S proteasome core and two 19S regulatory subunits. The 20S proteasome core is composed of 28 subunits that are arranged in four stacked rings, resulting in a barrel-shaped structure. The two end rings are each formed by seven alpha subunits, and the two central rings are each formed by seven beta subunits. The catalytic chamber with the active sites is on the inside of the barrel.

It localises to the cytoplasm. The protein localises to the nucleus. Its function is as follows. Non-catalytic component of the proteasome, a multicatalytic proteinase complex which is characterized by its ability to cleave peptides with Arg, Phe, Tyr, Leu, and Glu adjacent to the leaving group at neutral or slightly basic pH. The proteasome has an ATP-dependent proteolytic activity. This is Proteasome subunit beta type-3 (PBC1) from Picea mariana (Black spruce).